A 99-amino-acid chain; its full sequence is Large ribosomal subunit protein uL23 (99 aa).

It belongs to the universal ribosomal protein uL23 family. As to quaternary structure, part of the 50S ribosomal subunit. Contacts protein L29, and trigger factor when it is bound to the ribosome.

Functionally, one of the early assembly proteins it binds 23S rRNA. One of the proteins that surrounds the polypeptide exit tunnel on the outside of the ribosome. Forms the main docking site for trigger factor binding to the ribosome. In Synechococcus sp. (strain JA-2-3B'a(2-13)) (Cyanobacteria bacterium Yellowstone B-Prime), this protein is Large ribosomal subunit protein uL23.